The sequence spans 369 residues: 3 beta-hydroxysteroid dehydrogenase type 7 (369 aa).

Y159 (proton acceptor) is an active-site residue. An NAD(+)-binding site is contributed by K163. 2 consecutive transmembrane segments (helical) span residues L289–L309 and P311–F331.

The protein belongs to the 3-beta-HSD family.

Its subcellular location is the endoplasmic reticulum membrane. It carries out the reaction 7alpha-hydroxycholesterol + NAD(+) = 7alpha-hydroxycholest-4-en-3-one + NADH + H(+). The enzyme catalyses 7alpha,25-dihydroxycholesterol + NAD(+) = 7alpha,25-dihydroxy-4-cholesten-3-one + NADH + H(+). The catalysed reaction is (25R)-cholest-5-en-3beta,7alpha,26-triol + NAD(+) = (25R)-7alpha,26-dihydroxycholest-4-en-3-one + NADH + H(+). It catalyses the reaction (24S)-7alpha-dihydroxycholesterol + NAD(+) = (24S)-7alpha,24-dihydroxycholest-4-en-3-one + NADH + H(+). The protein operates within lipid metabolism; steroid biosynthesis. In terms of biological role, the 3-beta-HSD enzymatic system plays a crucial role in the biosynthesis of all classes of hormonal steroids. HSD VII is active against four 7-alpha-hydroxylated sterols. Does not metabolize several different C(19/21) steroids as substrates. Involved in bile acid synthesis. Plays a key role in cell positioning and movement in lymphoid tissues by mediating degradation of 7-alpha,25-dihydroxycholesterol (7-alpha,25-OHC): 7-alpha,25-OHC acts as a ligand for the G protein-coupled receptor GPR183/EBI2, a chemotactic receptor for a number of lymphoid cells. The chain is 3 beta-hydroxysteroid dehydrogenase type 7 from Homo sapiens (Human).